The sequence spans 339 residues: Glycerol-3-phosphate dehydrogenase [NAD(P)+] (339 aa).

Residues Ser14, Tyr15, His35, and Lys109 each coordinate NADPH. Sn-glycerol 3-phosphate contacts are provided by Lys109, Gly138, and Thr140. Ala142 is a binding site for NADPH. Lys194, Asp247, Ser257, Arg258, and Asn259 together coordinate sn-glycerol 3-phosphate. Lys194 functions as the Proton acceptor in the catalytic mechanism. An NADPH-binding site is contributed by Arg258. Residues Val282 and Glu284 each contribute to the NADPH site.

The protein belongs to the NAD-dependent glycerol-3-phosphate dehydrogenase family.

Its subcellular location is the cytoplasm. It catalyses the reaction sn-glycerol 3-phosphate + NAD(+) = dihydroxyacetone phosphate + NADH + H(+). The enzyme catalyses sn-glycerol 3-phosphate + NADP(+) = dihydroxyacetone phosphate + NADPH + H(+). Its pathway is membrane lipid metabolism; glycerophospholipid metabolism. Catalyzes the reduction of the glycolytic intermediate dihydroxyacetone phosphate (DHAP) to sn-glycerol 3-phosphate (G3P), the key precursor for phospholipid synthesis. The sequence is that of Glycerol-3-phosphate dehydrogenase [NAD(P)+] from Shewanella halifaxensis (strain HAW-EB4).